Here is a 1119-residue protein sequence, read N- to C-terminus: Protein translocase subunit SecA (1119 aa).

ATP is bound by residues Q175, 213–217 (GEGKT), and D714. Zn(2+) is bound by residues C1106, C1108, C1117, and C1118.

The protein belongs to the SecA family. In terms of assembly, monomer and homodimer. Part of the essential Sec protein translocation apparatus which comprises SecA, SecYEG and auxiliary proteins SecDF. Other proteins may also be involved. The cofactor is Zn(2+).

It localises to the cell inner membrane. Its subcellular location is the cytoplasm. The catalysed reaction is ATP + H2O + cellular proteinSide 1 = ADP + phosphate + cellular proteinSide 2.. In terms of biological role, part of the Sec protein translocase complex. Interacts with the SecYEG preprotein conducting channel. Has a central role in coupling the hydrolysis of ATP to the transfer of proteins into and across the cell membrane, serving as an ATP-driven molecular motor driving the stepwise translocation of polypeptide chains across the membrane. The chain is Protein translocase subunit SecA from Azobacteroides pseudotrichonymphae genomovar. CFP2.